A 442-amino-acid polypeptide reads, in one-letter code: Proline--tRNA ligase (442 aa).

The protein belongs to the class-II aminoacyl-tRNA synthetase family. ProS type 2 subfamily. Homodimer.

The protein localises to the cytoplasm. It catalyses the reaction tRNA(Pro) + L-proline + ATP = L-prolyl-tRNA(Pro) + AMP + diphosphate. Its function is as follows. Catalyzes the attachment of proline to tRNA(Pro) in a two-step reaction: proline is first activated by ATP to form Pro-AMP and then transferred to the acceptor end of tRNA(Pro). This is Proline--tRNA ligase from Brucella abortus (strain S19).